We begin with the raw amino-acid sequence, 293 residues long: Ribosomal protein L11 methyltransferase (293 aa).

S-adenosyl-L-methionine contacts are provided by threonine 145, glycine 166, aspartate 188, and asparagine 230.

It belongs to the methyltransferase superfamily. PrmA family.

It localises to the cytoplasm. The catalysed reaction is L-lysyl-[protein] + 3 S-adenosyl-L-methionine = N(6),N(6),N(6)-trimethyl-L-lysyl-[protein] + 3 S-adenosyl-L-homocysteine + 3 H(+). In terms of biological role, methylates ribosomal protein L11. This Yersinia pseudotuberculosis serotype I (strain IP32953) protein is Ribosomal protein L11 methyltransferase.